A 180-amino-acid chain; its full sequence is Bifunctional protein PyrR (180 aa).

The PRPP-binding signature appears at 99 to 111 (VILVDDVLYTCRT).

It belongs to the purine/pyrimidine phosphoribosyltransferase family. PyrR subfamily. In terms of assembly, homodimer and homohexamer; in equilibrium.

The enzyme catalyses UMP + diphosphate = 5-phospho-alpha-D-ribose 1-diphosphate + uracil. Regulates transcriptional attenuation of the pyrimidine nucleotide (pyr) operon by binding in a uridine-dependent manner to specific sites on pyr mRNA. This disrupts an antiterminator hairpin in the RNA and favors formation of a downstream transcription terminator, leading to a reduced expression of downstream genes. In terms of biological role, also displays a weak uracil phosphoribosyltransferase activity which is not physiologically significant. In Clostridium botulinum (strain Alaska E43 / Type E3), this protein is Bifunctional protein PyrR.